The chain runs to 227 residues: Cytochrome c oxidase subunit 2 (227 aa).

The Mitochondrial intermembrane portion of the chain corresponds to 1 to 14 (MAYPMQLGLQDATS). Residues 15 to 45 (PIMEELTDFHDHTLMIVFLISTLVLYIISLM) form a helical membrane-spanning segment. The Mitochondrial matrix segment spans residues 46–59 (LTTKLTHTNTMDAQ). The chain crosses the membrane as a helical span at residues 60 to 87 (EVETVWTILPAIILIMIALPSLRILYMM). The Mitochondrial intermembrane segment spans residues 88–227 (DEINDPYLTV…QFESWTSSMT (140 aa)). Cu cation contacts are provided by His161, Cys196, Glu198, Cys200, His204, and Met207. Glu198 contacts Mg(2+).

It belongs to the cytochrome c oxidase subunit 2 family. Component of the cytochrome c oxidase (complex IV, CIV), a multisubunit enzyme composed of 14 subunits. The complex is composed of a catalytic core of 3 subunits MT-CO1, MT-CO2 and MT-CO3, encoded in the mitochondrial DNA, and 11 supernumerary subunits COX4I, COX5A, COX5B, COX6A, COX6B, COX6C, COX7A, COX7B, COX7C, COX8 and NDUFA4, which are encoded in the nuclear genome. The complex exists as a monomer or a dimer and forms supercomplexes (SCs) in the inner mitochondrial membrane with NADH-ubiquinone oxidoreductase (complex I, CI) and ubiquinol-cytochrome c oxidoreductase (cytochrome b-c1 complex, complex III, CIII), resulting in different assemblies (supercomplex SCI(1)III(2)IV(1) and megacomplex MCI(2)III(2)IV(2)). Found in a complex with TMEM177, COA6, COX18, COX20, SCO1 and SCO2. Interacts with TMEM177 in a COX20-dependent manner. Interacts with COX20. Interacts with COX16. Cu cation serves as cofactor.

The protein resides in the mitochondrion inner membrane. The enzyme catalyses 4 Fe(II)-[cytochrome c] + O2 + 8 H(+)(in) = 4 Fe(III)-[cytochrome c] + 2 H2O + 4 H(+)(out). Component of the cytochrome c oxidase, the last enzyme in the mitochondrial electron transport chain which drives oxidative phosphorylation. The respiratory chain contains 3 multisubunit complexes succinate dehydrogenase (complex II, CII), ubiquinol-cytochrome c oxidoreductase (cytochrome b-c1 complex, complex III, CIII) and cytochrome c oxidase (complex IV, CIV), that cooperate to transfer electrons derived from NADH and succinate to molecular oxygen, creating an electrochemical gradient over the inner membrane that drives transmembrane transport and the ATP synthase. Cytochrome c oxidase is the component of the respiratory chain that catalyzes the reduction of oxygen to water. Electrons originating from reduced cytochrome c in the intermembrane space (IMS) are transferred via the dinuclear copper A center (CU(A)) of subunit 2 and heme A of subunit 1 to the active site in subunit 1, a binuclear center (BNC) formed by heme A3 and copper B (CU(B)). The BNC reduces molecular oxygen to 2 water molecules using 4 electrons from cytochrome c in the IMS and 4 protons from the mitochondrial matrix. The chain is Cytochrome c oxidase subunit 2 (MT-CO2) from Cratogeomys castanops (Yellow-faced pocket gopher).